The sequence spans 216 residues: MLIAKLLLVVIVSYLLGSIPFGYLVSHRGSKIDIRSYGSGRTGATNVLRTMGRKAALLVAALDVVKGVSAVAFAGLVIGTEALTFGTNGMAILFAQVLAGLAAVAGHIWPVFLKFRGGRGVATFFGGMIALCPVAAIFGGEVLIIGAGLSGFASLGSITGVVGAYALLIPLTFISGFPTEYIVYAVLGSLLITIMHRDNIKRLLAGKERKLNEKSR.

5 helical membrane-spanning segments follow: residues 6–26 (LLLVVIVSYLLGSIPFGYLVS), 58–78 (LVAALDVVKGVSAVAFAGLVI), 92–112 (ILFAQVLAGLAAVAGHIWPVF), 125–145 (FGGMIALCPVAAIFGGEVLII), and 158–178 (ITGVVGAYALLIPLTFISGFP).

Belongs to the PlsY family. As to quaternary structure, probably interacts with PlsX.

The protein resides in the cell membrane. The catalysed reaction is an acyl phosphate + sn-glycerol 3-phosphate = a 1-acyl-sn-glycero-3-phosphate + phosphate. It participates in lipid metabolism; phospholipid metabolism. Functionally, catalyzes the transfer of an acyl group from acyl-phosphate (acyl-PO(4)) to glycerol-3-phosphate (G3P) to form lysophosphatidic acid (LPA). This enzyme utilizes acyl-phosphate as fatty acyl donor, but not acyl-CoA or acyl-ACP. This chain is Glycerol-3-phosphate acyltransferase 3, found in Dehalococcoides mccartyi (strain ATCC BAA-2266 / KCTC 15142 / 195) (Dehalococcoides ethenogenes (strain 195)).